Reading from the N-terminus, the 461-residue chain is Aldehyde dehydrogenase LUC3 (461 aa).

215 to 220 is a binding site for NAD(+); the sequence is GSTATG. Catalysis depends on residues glutamate 237 and cysteine 271.

The protein belongs to the aldehyde dehydrogenase family.

The enzyme catalyses an aldehyde + NAD(+) + H2O = a carboxylate + NADH + 2 H(+). The protein operates within mycotoxin biosynthesis. Functionally, aldehyde dehydrogenase; part of the gene cluster that mediates the biosynthesis of the mycotoxin lucilactaene and the lucilactaene-related compound NG-391 that act as cell cycle inhibitors with potent growth inhibitory activity against malarial parasites, moderate growth inhibitory activity against cancer cells, and no activity against bacteria and fungi. LUC3 is important for lucilactaene biosynthesis and performs the oxidation of the C-20 alcoholic analog prelucilactaene G into a carboxylic derivative that has still to be identified. The pathway begins with the hybrid PKS-NRPS synthetase LUC5 which is responsible for the condensation of one acetyl-coenzyme A (CoA) unit with six malonyl-CoA units and the amide linkage of the arising heptaketide and homoserine, subsequently releasing the first intermediate prelucilactaene B. Both the cytochrome P450 monooxygenase LUC2 and the hydrolase LUC6 function in parallel in modification of prelucilactaene B. LUC6 may catalyze the 2-pyrrolidone ring formation to form prelucilactaene C from prelucilactaene B, followed by C-15 hydroxylation by the same enzyme to give prelucilactaene D, which is then converted to prelucilactaene E by epoxidation, and finally to prelucilactaene F by cyclization. Prelucilactane D, prelucilactaene E, and prelucilactaene F can be converted to dihydrolucilactaene, NG391, and lucilactaene, respectively, via C-20 methyl group hydroxylation by the cytochrome P450 monooxygenase LUC2. However, LUC2, unlike FUS8 in fusarin C biosynthesis, is not enough for the full oxidation of the C-20 methyl group into carboxylic acid, which is a prerequisite for the final methylation step. The aldehyde dehydrogenase LUC3 is involved in the biosynthesis by further oxidation of the C-20 alcoholic analog prelucilactaene G into a carboxylic derivative. This unidentified carboxylic derivative may be converted to demethyllucilactaene. As the last step, the methyltransferase LUC1 methylates the hydroxyl group at C-21 of demethyllucilactaene to generate lucilactaene. This is Aldehyde dehydrogenase LUC3 from Fusarium sp.